A 159-amino-acid chain; its full sequence is SsrA-binding protein (159 aa).

Positions 131 to 159 (KGKKLHDKRESEKERDWNRQKSRLLKDNG) are disordered. A compositionally biased stretch (basic and acidic residues) spans 137–159 (DKRESEKERDWNRQKSRLLKDNG).

The protein belongs to the SmpB family.

Its subcellular location is the cytoplasm. Functionally, required for rescue of stalled ribosomes mediated by trans-translation. Binds to transfer-messenger RNA (tmRNA), required for stable association of tmRNA with ribosomes. tmRNA and SmpB together mimic tRNA shape, replacing the anticodon stem-loop with SmpB. tmRNA is encoded by the ssrA gene; the 2 termini fold to resemble tRNA(Ala) and it encodes a 'tag peptide', a short internal open reading frame. During trans-translation Ala-aminoacylated tmRNA acts like a tRNA, entering the A-site of stalled ribosomes, displacing the stalled mRNA. The ribosome then switches to translate the ORF on the tmRNA; the nascent peptide is terminated with the 'tag peptide' encoded by the tmRNA and targeted for degradation. The ribosome is freed to recommence translation, which seems to be the essential function of trans-translation. The protein is SsrA-binding protein of Rhizobium leguminosarum bv. trifolii (strain WSM2304).